The following is a 515-amino-acid chain: Folate synthesis bifunctional protein, mitochondrial (515 aa).

The N-terminal 28 residues, 1–28 (MSILKCLGVRGNQLCAARNYLKVLGFSS), are a transit peptide targeting the mitochondrion. The tract at residues 47–172 (VIALGSNVGD…PFVMAPLMDL (126 aa)) is HPPK. The 269-residue stretch at 230–498 (TLVMGILNLT…NVKDNLDAVK (269 aa)) folds into the Pterin-binding domain. The DHPS stretch occupies residues 232-515 (VMGILNLTPD…QKSSPIKFKQ (284 aa)). Residue Asn-237 participates in Mg(2+) binding. Residues Thr-277, Asp-314, Asn-333, Asp-406, Lys-451, and 486–488 (RVH) each bind (7,8-dihydropterin-6-yl)methyl diphosphate.

It in the N-terminal section; belongs to the HPPK family. The protein in the C-terminal section; belongs to the DHPS family. In terms of assembly, homomultimer. Requires Mg(2+) as cofactor.

It localises to the mitochondrion. It carries out the reaction 6-hydroxymethyl-7,8-dihydropterin + ATP = (7,8-dihydropterin-6-yl)methyl diphosphate + AMP + H(+). The catalysed reaction is (7,8-dihydropterin-6-yl)methyl diphosphate + 4-aminobenzoate = 7,8-dihydropteroate + diphosphate. Its pathway is cofactor biosynthesis; tetrahydrofolate biosynthesis; 2-amino-4-hydroxy-6-hydroxymethyl-7,8-dihydropteridine diphosphate from 7,8-dihydroneopterin triphosphate: step 4/4. It participates in cofactor biosynthesis; tetrahydrofolate biosynthesis; 7,8-dihydrofolate from 2-amino-4-hydroxy-6-hydroxymethyl-7,8-dihydropteridine diphosphate and 4-aminobenzoate: step 1/2. Catalyzes the first two consecutive steps of tetrahydrofolate biosynthesis. The protein is Folate synthesis bifunctional protein, mitochondrial of Pisum sativum (Garden pea).